The chain runs to 90 residues: Probable Fe(2+)-trafficking protein (90 aa).

The protein belongs to the Fe(2+)-trafficking protein family.

Could be a mediator in iron transactions between iron acquisition and iron-requiring processes, such as synthesis and/or repair of Fe-S clusters in biosynthetic enzymes. This chain is Probable Fe(2+)-trafficking protein, found in Methylococcus capsulatus (strain ATCC 33009 / NCIMB 11132 / Bath).